Consider the following 862-residue polypeptide: Eukaryotic translation initiation factor 3 subunit C (862 aa).

Residues 1-81 (MSSRFFYGGG…EEEEKVTVVK (81 aa)) form a disordered region. The segment covering 17-54 (SSDEEELYSDREEEEKSEEEESSEEEDETSEEEESDEE) has biased composition (acidic residues). Positions 55-65 (TGARKFLKDVA) are enriched in basic and acidic residues. Over residues 66–75 (SDSEEEEEEE) the composition is skewed to acidic residues. Residues 600–774 (FHMHINLELL…NAIVFRKGVE (175 aa)) enclose the PCI domain. Residues 813–862 (RDQGAGARGGRGSGRGGQARGGPRFPGGQQGRRPGGQQFGGGALGGAIKA) are disordered. A compositionally biased stretch (gly residues) spans 818 to 862 (GARGGRGSGRGGQARGGPRFPGGQQGRRPGGQQFGGGALGGAIKA).

Belongs to the eIF-3 subunit C family. As to quaternary structure, component of the eukaryotic translation initiation factor 3 (eIF-3) complex.

It is found in the cytoplasm. Its function is as follows. Component of the eukaryotic translation initiation factor 3 (eIF-3) complex, which is involved in protein synthesis of a specialized repertoire of mRNAs and, together with other initiation factors, stimulates binding of mRNA and methionyl-tRNAi to the 40S ribosome. The eIF-3 complex specifically targets and initiates translation of a subset of mRNAs involved in cell proliferation. The polypeptide is Eukaryotic translation initiation factor 3 subunit C (nip1) (Aspergillus fumigatus (strain CBS 144.89 / FGSC A1163 / CEA10) (Neosartorya fumigata)).